The following is a 118-amino-acid chain: Large ribosomal subunit protein uL18 (118 aa).

The protein belongs to the universal ribosomal protein uL18 family. As to quaternary structure, part of the 50S ribosomal subunit; part of the 5S rRNA/L5/L18/L25 subcomplex. Contacts the 5S and 23S rRNAs.

Functionally, this is one of the proteins that bind and probably mediate the attachment of the 5S RNA into the large ribosomal subunit, where it forms part of the central protuberance. This is Large ribosomal subunit protein uL18 from Levilactobacillus brevis (strain ATCC 367 / BCRC 12310 / CIP 105137 / JCM 1170 / LMG 11437 / NCIMB 947 / NCTC 947) (Lactobacillus brevis).